The primary structure comprises 652 residues: DNA ligase (652 aa).

NAD(+)-binding positions include 29–33, 78–79, and Glu107; these read DSEYD and SL. Residue Lys109 is the N6-AMP-lysine intermediate of the active site. Positions 130, 164, 278, and 302 each coordinate NAD(+). 4 residues coordinate Zn(2+): Cys395, Cys398, Cys413, and Cys418. The BRCT domain maps to 577 to 652; that stretch reads VADAALSGLT…VRDEAWLESL (76 aa).

The protein belongs to the NAD-dependent DNA ligase family. LigA subfamily. The cofactor is Mg(2+). It depends on Mn(2+) as a cofactor.

The enzyme catalyses NAD(+) + (deoxyribonucleotide)n-3'-hydroxyl + 5'-phospho-(deoxyribonucleotide)m = (deoxyribonucleotide)n+m + AMP + beta-nicotinamide D-nucleotide.. DNA ligase that catalyzes the formation of phosphodiester linkages between 5'-phosphoryl and 3'-hydroxyl groups in double-stranded DNA using NAD as a coenzyme and as the energy source for the reaction. It is essential for DNA replication and repair of damaged DNA. The polypeptide is DNA ligase (Streptococcus pneumoniae serotype 4 (strain ATCC BAA-334 / TIGR4)).